The following is a 313-amino-acid chain: tRNA dimethylallyltransferase (313 aa).

11-18 (GPTAGGKT) is an ATP binding site. 13–18 (TAGGKT) lines the substrate pocket. 3 interaction with substrate tRNA regions span residues 36 to 39 (DSAL), 160 to 164 (QRIGR), and 243 to 248 (RCVGYR).

This sequence belongs to the IPP transferase family. As to quaternary structure, monomer. Requires Mg(2+) as cofactor.

It carries out the reaction adenosine(37) in tRNA + dimethylallyl diphosphate = N(6)-dimethylallyladenosine(37) in tRNA + diphosphate. In terms of biological role, catalyzes the transfer of a dimethylallyl group onto the adenine at position 37 in tRNAs that read codons beginning with uridine, leading to the formation of N6-(dimethylallyl)adenosine (i(6)A). The sequence is that of tRNA dimethylallyltransferase from Neisseria meningitidis serogroup A / serotype 4A (strain DSM 15465 / Z2491).